The following is a 138-amino-acid chain: Hexon-interlacing protein (138 aa).

A coiled-coil region spans residues 100–127 (LLVLLAQLEALTQRLGELSKQVAQLREQ).

The protein belongs to the adenoviridae hexon-interlacing protein family. Homotrimer. Interacts with hexon protein; this interaction tethers the hexons together. Self-interacts with adjacent proteins. Interacts with kinesin light chain KLC1; this interaction leads to capsid disruption at the nuclear pore complex during virus entry into host cell.

The protein resides in the virion. The protein localises to the host nucleus. In terms of biological role, structural component of the virion that acts as a cement protein on the capsid exterior and forms triskelion structures consisting of three molecules that stabilize three hexon trimers at the center of each icosahedral facet and fixes the peripentonal hexons. Dispensable for assembly. During virus entry, recruits the anterograde motor kinesin-1 to the capsid docked at the nuclear pore complex thereby subjecting the docked capsid to a pulling force. The resulting tension leads to capsid disruption, dispersion of capsid fragments toward cell periphery and eventually viral DNA entry into the host nucleus. This chain is Hexon-interlacing protein, found in Human adenovirus B serotype 7 (HAdV-7).